The chain runs to 177 residues: ATP-dependent protease subunit HslV (177 aa).

Residue Thr6 is part of the active site. Residues Ala162, Cys165, and Thr168 each contribute to the Na(+) site.

Belongs to the peptidase T1B family. HslV subfamily. As to quaternary structure, a double ring-shaped homohexamer of HslV is capped on each side by a ring-shaped HslU homohexamer. The assembly of the HslU/HslV complex is dependent on binding of ATP.

It localises to the cytoplasm. It catalyses the reaction ATP-dependent cleavage of peptide bonds with broad specificity.. With respect to regulation, allosterically activated by HslU binding. In terms of biological role, protease subunit of a proteasome-like degradation complex believed to be a general protein degrading machinery. This chain is ATP-dependent protease subunit HslV, found in Lawsonia intracellularis (strain PHE/MN1-00).